We begin with the raw amino-acid sequence, 509 residues long: Zinc finger protein Aiolos (509 aa).

Over residues 1–19 the composition is skewed to polar residues; that stretch reads MEDIQTNAELKSTQEQSVP. A disordered region spans residues 1-86; the sequence is MEDIQTNAEL…MGNAEEPEIP (86 aa). Ser22 and Ser42 each carry phosphoserine. Basic and acidic residues predominate over residues 56–72; that stretch reads DSMKVKDEYSERDENVL. Residues Lys61, Lys73, and Lys100 each participate in a glycyl lysine isopeptide (Lys-Gly) (interchain with G-Cter in SUMO2) cross-link. 3 consecutive C2H2-type zinc fingers follow at residues 118–140, 146–168, and 174–196; these read MNCD…KRSH, FQCN…IKLH, and FKCH…LRTH. The segment at 202-224 adopts a C2H2-type 4; atypical zinc-finger fold; that stretch reads YKCEFCGRSYKQRSSLEEHKERC. Lys245 participates in a covalent cross-link: Glycyl lysine isopeptide (Lys-Gly) (interchain with G-Cter in SUMO2). Thr326 bears the Phosphothreonine mark. Residues 364 to 394 form a disordered region; it reads IHLPEKSVPSERGLSPNNSGHDSTDTDSNHE. The residue at position 378 (Ser378) is a Phosphoserine. Over residues 385–394 the composition is skewed to basic and acidic residues; it reads DSTDTDSNHE. The C2H2-type 5 zinc finger occupies 452–474; sequence YRCDHCRVLFLDYVMFTIHMGCH. Residues 452 to 504 are mediates homodimerization and heterodimerization; sequence YRCDHCRVLFLDYVMFTIHMGCHGFRDPFECNMCGYRSHDRYEFSSHIARGEH. The segment at 480–504 adopts a C2H2-type 6; atypical zinc-finger fold; that stretch reads FECNMCGYRSHDRYEFSSHIARGEH.

The protein belongs to the Ikaros C2H2-type zinc-finger protein family. Homodimer. Heterodimer with other IKAROS family members. Interacts with IKZF4 and IKZF5. Interacts with IKZF1. Interacts with HRAS. Interacts with FOXP3; this interaction may be required for silencing target genes and regulating the suppressive activity of FOXP3-positive regulatory T-cells (Treg). Interacts with BCL21L isoform Bcl-X(L); this interaction blocks the anti-apoptotic role of BCL21L. Associates with histone deacetylase complexes containing HDAC1, MTA2 and SIN3A. Post-translationally, phosphorylation on tyrosine residues induced by IL2 is required for dissociation from HRAS and nuclear translocation of IKZF3 in T-cells. Phosphorylation on tyrosine residues induced by IL4 is required for dissociation from Bcl-X(L) in T-cells. As to expression, expressed most strongly in peripheral blood leukocytes, the spleen, and the thymus.

The protein localises to the nucleus. It localises to the cytoplasm. In terms of biological role, transcription factor that plays an important role in the regulation of lymphocyte differentiation. Plays an essential role in regulation of B-cell differentiation, proliferation and maturation to an effector state. Involved in regulating BCL2 expression and controlling apoptosis in T-cells in an IL2-dependent manner. This chain is Zinc finger protein Aiolos (IKZF3), found in Homo sapiens (Human).